Consider the following 171-residue polypeptide: Shikimate kinase (171 aa).

14 to 19 is an ATP binding site; it reads GAGKST. Mg(2+) is bound at residue serine 18. Substrate is bound by residues aspartate 36, arginine 60, and glycine 82. ATP is bound at residue arginine 120. Residue arginine 139 coordinates substrate. Glutamine 156 is an ATP binding site.

This sequence belongs to the shikimate kinase family. In terms of assembly, monomer. The cofactor is Mg(2+).

It is found in the cytoplasm. The catalysed reaction is shikimate + ATP = 3-phosphoshikimate + ADP + H(+). It functions in the pathway metabolic intermediate biosynthesis; chorismate biosynthesis; chorismate from D-erythrose 4-phosphate and phosphoenolpyruvate: step 5/7. In terms of biological role, catalyzes the specific phosphorylation of the 3-hydroxyl group of shikimic acid using ATP as a cosubstrate. The protein is Shikimate kinase of Shewanella woodyi (strain ATCC 51908 / MS32).